The chain runs to 156 residues: Putative HTH-type transcriptional regulator YwgB (156 aa).

Positions 2 to 133 (KMKSGMEQAV…REESLQHVMD (132 aa)) constitute an HTH rrf2-type domain.

This is Putative HTH-type transcriptional regulator YwgB (ywgB) from Bacillus subtilis (strain 168).